A 407-amino-acid chain; its full sequence is E3 ubiquitin-protein ligase TRIM13 (407 aa).

An RING-type zinc finger spans residues 10 to 58; sequence CPICCSLFDDPRVLPCSHNFCKKCLEGLLEGNVRNSLWRPSPFKCPTCR. Residues 89–131 form a B box-type zinc finger; sequence PKMPVCKGHLGQPLNIFCVTDMQLICGICATRGEHTKHVFSSI. Zn(2+)-binding residues include Cys94, His97, Cys117, and His123. A coiled-coil region spans residues 172–200; that stretch reads LQLLTKDSDKVKEFFEKLQHTLDQKKNEI. The helical transmembrane segment at 316-336 threads the bilayer; it reads LLLMMVVLLGLLIFFGPTVFL.

It belongs to the TRIM/RBCC family. Interacts (via C-terminal domain) with VCP. Interacts with AKT1; the interaction ubiquitinates AKT1 and leads to its proteasomal degradation. Interacts with MDM2; the interaction ubiquitinates AKT1 and leads to its proteasomal degradation. Interacts with p62/SQSTM1. Interacts with TRAF6. Interacts with IKBKG/NEMO. Auto-ubiquitinated; requires the RING-type zinc finger. Auto-polyubiquitination leads to proteasomal degradation.

It localises to the endoplasmic reticulum membrane. It carries out the reaction S-ubiquitinyl-[E2 ubiquitin-conjugating enzyme]-L-cysteine + [acceptor protein]-L-lysine = [E2 ubiquitin-conjugating enzyme]-L-cysteine + N(6)-ubiquitinyl-[acceptor protein]-L-lysine.. It functions in the pathway protein modification; protein ubiquitination. In terms of biological role, endoplasmic reticulum (ER) membrane anchored E3 ligase involved in the retrotranslocation and turnover of membrane and secretory proteins from the ER through a set of processes named ER-associated degradation (ERAD). This process acts on misfolded proteins as well as in the regulated degradation of correctly folded proteins. Enhances ionizing radiation-induced p53/TP53 stability and apoptosis via ubiquitinating MDM2 and AKT1 and decreasing AKT1 kinase activity through MDM2 and AKT1 proteasomal degradation. Regulates ER stress-induced autophagy, and may act as a tumor suppressor. Also plays a role in innate immune response by stimulating NF-kappa-B activity in the TLR2 signaling pathway. Ubiquitinates TRAF6 via the 'Lys-29'-linked polyubiquitination chain resulting in NF-kappa-B activation. Participates as well in T-cell receptor-mediated NF-kappa-B activation. In the presence of TNF, modulates the IKK complex by regulating IKBKG/NEMO ubiquitination leading to the repression of NF-kappa-B. This Mus musculus (Mouse) protein is E3 ubiquitin-protein ligase TRIM13 (Trim13).